The sequence spans 468 residues: 3-isopropylmalate dehydratase large subunit (468 aa).

3 residues coordinate [4Fe-4S] cluster: cysteine 347, cysteine 407, and cysteine 410.

The protein belongs to the aconitase/IPM isomerase family. LeuC type 1 subfamily. As to quaternary structure, heterodimer of LeuC and LeuD. Requires [4Fe-4S] cluster as cofactor.

It catalyses the reaction (2R,3S)-3-isopropylmalate = (2S)-2-isopropylmalate. The protein operates within amino-acid biosynthesis; L-leucine biosynthesis; L-leucine from 3-methyl-2-oxobutanoate: step 2/4. In terms of biological role, catalyzes the isomerization between 2-isopropylmalate and 3-isopropylmalate, via the formation of 2-isopropylmaleate. This is 3-isopropylmalate dehydratase large subunit from Glaesserella parasuis serovar 5 (strain SH0165) (Haemophilus parasuis).